We begin with the raw amino-acid sequence, 112 residues long: Thyroid transcription factor 1 (112 aa).

Positions 1–60 (RRNRRVLFSQAQVYELERRFKQQKYLSAPEREHLASMIHLTPTQVKIWFQNHRYKMKRQA) form a DNA-binding region, homeobox. A disordered region spans residues 59–100 (QAKDKAAQQQLQQDSGGGGGGGGAGCPQQQQAQQQSPRRVAV). The span at 73–83 (SGGGGGGGGAG) shows a compositional bias: gly residues. Low complexity predominate over residues 84–93 (CPQQQQAQQQ).

This sequence belongs to the NK-2 homeobox family. In terms of processing, phosphorylated on serine residues.

Its subcellular location is the nucleus. Functionally, transcription factor that binds and activates the promoter of thyroid specific genes such as thyroglobulin, thyroperoxidase, and thyrotropin receptor. Crucial in the maintenance of the thyroid differentiation phenotype. May play a role in lung development and surfactant homeostasis. This chain is Thyroid transcription factor 1 (TITF1), found in Cavia porcellus (Guinea pig).